A 547-amino-acid chain; its full sequence is uncharacterized protein (547 aa).

At 1 to 21 (MVKKHQNSKMGNTNHFGHLKS) the chain is on the extracellular side. The chain crosses the membrane as a helical span at residues 22-42 (FVGGNVVALGAGTPYLFSFYA). Residues 43–58 (PQLLSKCHIPVSASSK) are Cytoplasmic-facing. The chain crosses the membrane as a helical span at residues 59–79 (LSFSLTIGSSLMGILAGIVVD). Residues 80–83 (RSPK) are Extracellular-facing. A helical membrane pass occupies residues 84 to 104 (LSCLIGSMCVFIAYLILNLCY). At 105–110 (KHEWSS) the chain is on the cytoplasmic side. The helical transmembrane segment at 111 to 131 (TFLISLSLVLIGYGSVSGFYA) threads the bilayer. The Extracellular segment spans residues 132–144 (SVKCANTNFPQHR). A helical membrane pass occupies residues 145–165 (GTAGAFPVSLYGLSGMVFSYL). The Cytoplasmic portion of the chain corresponds to 166 to 175 (CSKLFGENIE). A helical transmembrane segment spans residues 176-196 (HVFIFLMVACGCMILVGYFSL). The Extracellular portion of the chain corresponds to 197–323 (DIFSNAEGDD…LKSSTFIGYY (127 aa)). Residue Ser237 is modified to Phosphoserine. The interval 275-300 (LLSPSSPHTKYDFEDENTSKNTVGEN) is disordered. The helical transmembrane segment at 324–344 (IVLGILQGVGLMYIYSVGFMV) threads the bilayer. The Cytoplasmic segment spans residues 345 to 398 (QAQVSTPPLNQLPINAEKIQSLQVTLLSLLSFCGRLSSGPISDFLVKKFKAQRL). A helical transmembrane segment spans residues 399 to 419 (WNIVIASLLVFLASNKISHDF). Over 420 to 437 (SSIEDPSLRASKSFKNIS) the chain is Extracellular. The helical transmembrane segment at 438–458 (VCSAIFGYSFGVLFGTFPSIV) threads the bilayer. At 459–469 (ADRFGTNGYST) the chain is on the cytoplasmic side. Residues 470-490 (LWGVLTTGGVFSVSVFTDILG) traverse the membrane as a helical segment. At 491 to 514 (RDFKANTGDDDGNCKKGVLCYSYT) the chain is on the extracellular side. Residues 515–535 (FMVTKYCAAFNLLFVLGIIGY) traverse the membrane as a helical segment. The Cytoplasmic portion of the chain corresponds to 536–547 (TYYRRRATANSL).

Its subcellular location is the membrane. This is an uncharacterized protein from Saccharomyces cerevisiae (strain ATCC 204508 / S288c) (Baker's yeast).